The primary structure comprises 141 residues: Lutropin subunit beta (141 aa).

The first 20 residues, 1–20 (MEMLQGLLLWLLLSVAGVWA), serve as a signal peptide directing secretion. Serine 21 is modified (blocked amino end (Ser)). 6 disulfides stabilise this stretch: cysteine 29-cysteine 77, cysteine 43-cysteine 92, cysteine 46-cysteine 130, cysteine 54-cysteine 108, cysteine 58-cysteine 110, and cysteine 113-cysteine 120. A glycan (N-linked (GlcNAc...) asparagine) is linked at asparagine 33.

It belongs to the glycoprotein hormones subunit beta family. In terms of assembly, heterodimer of a common alpha chain and a unique beta chain which confers biological specificity to thyrotropin, lutropin, follitropin and gonadotropin.

It localises to the secreted. Its function is as follows. Promotes spermatogenesis and ovulation by stimulating the testes and ovaries to synthesize steroids. In Sus scrofa (Pig), this protein is Lutropin subunit beta (LHB).